Here is a 323-residue protein sequence, read N- to C-terminus: Cyclin-H (323 aa).

Residues 296-323 (GYEDDGYISKKPKTEEDEWTDEDFGDSL) are disordered. Residues 310–323 (EEDEWTDEDFGDSL) are compositionally biased toward acidic residues.

The protein belongs to the cyclin family. Cyclin C subfamily. In terms of assembly, associates primarily with CDK7 and MAT1 to form the CAK complex. CAK can further associate with the core-TFIIH to form the TFIIH basal transcription factor.

It localises to the nucleus. Regulates CDK7, the catalytic subunit of the CDK-activating kinase (CAK) enzymatic complex. CAK activates the cyclin-associated kinases CDK1, CDK2, CDK4 and CDK6 by threonine phosphorylation. CAK complexed to the core-TFIIH basal transcription factor activates RNA polymerase II by serine phosphorylation of the repetitive C-terminal domain (CTD) of its large subunit (POLR2A), allowing its escape from the promoter and elongation of the transcripts. Involved in cell cycle control and in RNA transcription by RNA polymerase II. Its expression and activity are constant throughout the cell cycle. This Xenopus laevis (African clawed frog) protein is Cyclin-H (ccnh).